The chain runs to 449 residues: C4-dicarboxylate transport protein (449 aa).

The tract at residues 1–20 (MSALTESFGPVPSAKSKPPA) is disordered. Residues 10-20 (PVPSAKSKPPA) show a composition bias toward low complexity. 8 helical membrane passes run 28–48 (LLYLQVLVAIVLGVLLGWLSP), 66–86 (LIKMVIAPIIFCTVVSGIAHI), 101–121 (LYFEVVSSFALLIGLVVGNVV), 167–187 (GDILQVLLFAILFGFALMTLG), 205–225 (FGVIAIVMKAAPVGAFGAMAF), 241–261 (LIAVFYITAALFVVLVLGLIA), 326–346 (IYMTLATLFIAQALGVDLTWT), and 370–390 (FITLAATLSVVNPALVPGMAI).

The protein belongs to the dicarboxylate/amino acid:cation symporter (DAACS) (TC 2.A.23) family.

It localises to the cell inner membrane. Functionally, responsible for the transport of dicarboxylates such as succinate, fumarate, and malate from the periplasm across the membrane. The sequence is that of C4-dicarboxylate transport protein from Rhodopseudomonas palustris (strain BisB18).